Reading from the N-terminus, the 389-residue chain is Succinate--CoA ligase [ADP-forming] subunit beta (389 aa).

The ATP-grasp domain occupies 9-236 (KELFAKHEVP…KDATDPLELK (228 aa)). Residues Lys-45, 52–54 (GRG), Ser-94, and Glu-99 contribute to the ATP site. Positions 191 and 205 each coordinate Mg(2+). Residues Asn-256 and 318 to 320 (GIT) each bind substrate.

Belongs to the succinate/malate CoA ligase beta subunit family. As to quaternary structure, heterotetramer of two alpha and two beta subunits. Mg(2+) is required as a cofactor.

The catalysed reaction is succinate + ATP + CoA = succinyl-CoA + ADP + phosphate. The enzyme catalyses GTP + succinate + CoA = succinyl-CoA + GDP + phosphate. The protein operates within carbohydrate metabolism; tricarboxylic acid cycle; succinate from succinyl-CoA (ligase route): step 1/1. Functionally, succinyl-CoA synthetase functions in the citric acid cycle (TCA), coupling the hydrolysis of succinyl-CoA to the synthesis of either ATP or GTP and thus represents the only step of substrate-level phosphorylation in the TCA. The beta subunit provides nucleotide specificity of the enzyme and binds the substrate succinate, while the binding sites for coenzyme A and phosphate are found in the alpha subunit. The sequence is that of Succinate--CoA ligase [ADP-forming] subunit beta from Rhodococcus jostii (strain RHA1).